Consider the following 216-residue polypeptide: Thymidine kinase (216 aa).

Residues 9-16 and 86-89 contribute to the ATP site; these read GTMDCGKS and DEAQ. The active-site Proton acceptor is Glu87.

Belongs to the thymidine kinase family. Homotetramer.

Its subcellular location is the cytoplasm. It carries out the reaction thymidine + ATP = dTMP + ADP + H(+). In Streptomyces avermitilis (strain ATCC 31267 / DSM 46492 / JCM 5070 / NBRC 14893 / NCIMB 12804 / NRRL 8165 / MA-4680), this protein is Thymidine kinase.